The primary structure comprises 190 residues: uncharacterized protein (190 aa).

The chain crosses the membrane as a helical span at residues leucine 12–alanine 34.

It is found in the membrane. This is an uncharacterized protein from Archaeoglobus fulgidus (strain ATCC 49558 / DSM 4304 / JCM 9628 / NBRC 100126 / VC-16).